A 489-amino-acid chain; its full sequence is Rhamnulokinase (489 aa).

13–17 contributes to the ATP binding site; the sequence is ASSGR. Residues Cys68 and Cys222 are joined by a disulfide bond. Substrate contacts are provided by residues Gly83 and 236-238; that span reads HDT. Catalysis depends on Asp237, which acts as the Proton acceptor. Thr259 is a binding site for ATP. Residue Asn296 participates in substrate binding. Gln304 contributes to the ATP binding site. Cys353 and Cys370 are oxidised to a cystine. Gly402 serves as a coordination point for ATP. A disulfide bond links Cys413 and Cys417.

This sequence belongs to the rhamnulokinase family. Mg(2+) is required as a cofactor.

It carries out the reaction L-rhamnulose + ATP = L-rhamnulose 1-phosphate + ADP + H(+). Its pathway is carbohydrate degradation; L-rhamnose degradation; glycerone phosphate from L-rhamnose: step 2/3. Its function is as follows. Involved in the catabolism of L-rhamnose (6-deoxy-L-mannose). Catalyzes the transfer of the gamma-phosphate group from ATP to the 1-hydroxyl group of L-rhamnulose to yield L-rhamnulose 1-phosphate. This chain is Rhamnulokinase, found in Salmonella dublin (strain CT_02021853).